A 976-amino-acid polypeptide reads, in one-letter code: Probable alanine--tRNA ligase, chloroplastic/mitochondrial (976 aa).

Residues 1–54 constitute a chloroplast and mitochondrion transit peptide; that stretch reads MPRPGFAHATAPALAHARARISPVARRRVVVMRTRVDGAAKSLVTQLRLALGST. The disordered stretch occupies residues 71–95; the sequence is LGTATNDQSTGTRANPNAEGKDNSG. Residues 73–85 show a composition bias toward polar residues; the sequence is TATNDQSTGTRAN.

This sequence belongs to the class-II aminoacyl-tRNA synthetase family. In terms of assembly, monomer. Requires Zn(2+) as cofactor.

The protein localises to the plastid. The protein resides in the chloroplast. It localises to the mitochondrion. It carries out the reaction tRNA(Ala) + L-alanine + ATP = L-alanyl-tRNA(Ala) + AMP + diphosphate. In terms of biological role, catalyzes the attachment of alanine to tRNA(Ala) in a two-step reaction: alanine is first activated by ATP to form Ala-AMP and then transferred to the acceptor end of tRNA(Ala). Also edits incorrectly charged tRNA(Ala) via its editing domain. This Ostreococcus tauri protein is Probable alanine--tRNA ligase, chloroplastic/mitochondrial.